Reading from the N-terminus, the 551-residue chain is Putative transport protein CGSHiEE_03135 (551 aa).

Transmembrane regions (helical) follow at residues 4-24, 28-48, 65-85, 95-115, and 157-177; these read IAIT…IGHW, GVGL…HFTD, FGLI…FFSS, AFAI…HKIA, and VSYA…MWLI. RCK C-terminal domains lie at 191–275 and 277–360; these read RFNA…IIGY and VDAP…VIGN. The next 6 helical transmembrane spans lie at 370–390, 402–424, 438–458, 463–483, 492–512, and 529–549; these read MLPV…PFYI, AGGP…LYWF, IVLF…DTLV, LEWM…AGTI, YLTI…LAFA, and VYPL…VLLW.

Belongs to the AAE transporter (TC 2.A.81) family. YidE subfamily.

The protein resides in the cell membrane. The protein is Putative transport protein CGSHiEE_03135 of Haemophilus influenzae (strain PittEE).